Reading from the N-terminus, the 416-residue chain is Putative competence-damage inducible protein (416 aa).

Belongs to the CinA family.

In Bacillus velezensis (strain DSM 23117 / BGSC 10A6 / LMG 26770 / FZB42) (Bacillus amyloliquefaciens subsp. plantarum), this protein is Putative competence-damage inducible protein.